The chain runs to 130 residues: Small ribosomal subunit protein uS9 (130 aa).

It belongs to the universal ribosomal protein uS9 family.

The chain is Small ribosomal subunit protein uS9 from Clostridium perfringens (strain ATCC 13124 / DSM 756 / JCM 1290 / NCIMB 6125 / NCTC 8237 / Type A).